A 245-amino-acid polypeptide reads, in one-letter code: Phosphoribosylaminoimidazole-succinocarboxamide synthase (245 aa).

The protein belongs to the SAICAR synthetase family.

The catalysed reaction is 5-amino-1-(5-phospho-D-ribosyl)imidazole-4-carboxylate + L-aspartate + ATP = (2S)-2-[5-amino-1-(5-phospho-beta-D-ribosyl)imidazole-4-carboxamido]succinate + ADP + phosphate + 2 H(+). The protein operates within purine metabolism; IMP biosynthesis via de novo pathway; 5-amino-1-(5-phospho-D-ribosyl)imidazole-4-carboxamide from 5-amino-1-(5-phospho-D-ribosyl)imidazole-4-carboxylate: step 1/2. This is Phosphoribosylaminoimidazole-succinocarboxamide synthase from Nostoc sp. (strain PCC 7120 / SAG 25.82 / UTEX 2576).